Reading from the N-terminus, the 256-residue chain is MDNAIFPNKFKAALAAHQVQIGCWCALANPISTEVLGLAGFDWLVLDAEHAPNDVTTLIPQLMALKGSSSAQVVRVPTNEPIIIKRMLDIGFYNFLVPFVETAEQAAQAVASTRYPPEGIRGVSVSHRGNMFGTVPDYFAQSNKNISILVQIESQTGVDNVEAIAATEGVDGVFVGPSDLAAALGHLGNASHPEVQRAIQHIFASAKKHGKPSGILAPVEADARRYLEWGATFVAVGSDLGVFRSATQKLADAFKK.

The active-site Proton acceptor is H50. A substrate-binding site is contributed by Q151. E153 serves as a coordination point for Mg(2+). 2 residues coordinate substrate: S178 and D179. A Mg(2+)-binding site is contributed by D179.

It belongs to the HpcH/HpaI aldolase family. KDGluc aldolase subfamily. In terms of assembly, homohexamer; trimer of dimers. Mg(2+) serves as cofactor.

The catalysed reaction is 5-dehydro-4-deoxy-D-glucarate = 2-hydroxy-3-oxopropanoate + pyruvate. It catalyses the reaction 2-dehydro-3-deoxy-D-glucarate = 2-hydroxy-3-oxopropanoate + pyruvate. It participates in carbohydrate acid metabolism; galactarate degradation; D-glycerate from galactarate: step 2/3. In terms of biological role, catalyzes the reversible retro-aldol cleavage of both 5-keto-4-deoxy-D-glucarate and 2-keto-3-deoxy-D-glucarate to pyruvate and tartronic semialdehyde. The protein is 5-keto-4-deoxy-D-glucarate aldolase of Klebsiella pneumoniae subsp. pneumoniae (strain ATCC 700721 / MGH 78578).